Here is a 400-residue protein sequence, read N- to C-terminus: Phosphoglycerate kinase (400 aa).

Residues 22-24 (DFN), Arg-38, 61-64 (HLGR), Arg-119, and Arg-152 contribute to the substrate site. ATP is bound by residues Lys-205, Gly-296, Glu-327, and 353–356 (GGDT).

This sequence belongs to the phosphoglycerate kinase family. As to quaternary structure, monomer.

The protein resides in the cytoplasm. The enzyme catalyses (2R)-3-phosphoglycerate + ATP = (2R)-3-phospho-glyceroyl phosphate + ADP. It functions in the pathway carbohydrate degradation; glycolysis; pyruvate from D-glyceraldehyde 3-phosphate: step 2/5. The sequence is that of Phosphoglycerate kinase from Campylobacter jejuni subsp. doylei (strain ATCC BAA-1458 / RM4099 / 269.97).